The chain runs to 215 residues: Adenylate kinase (215 aa).

10–15 (GAGKGT) contacts ATP. The segment at 30–60 (STGDMLRAAIIKAGTEMGKQAKSVIDAGQLV) is NMP. Residues Thr31, Arg36, 58–60 (QLV), 86–89 (GFPR), and Gln93 each bind AMP. Positions 123–160 (GRRAHLPSGRTYHVTFNPSKVEGQDDVTGEPLVIREDD) are LID. ATP is bound by residues Arg124 and 133 to 134 (TY). Residues Arg157 and Arg168 each coordinate AMP. Lys201 provides a ligand contact to ATP.

The protein belongs to the adenylate kinase family. In terms of assembly, monomer.

It localises to the cytoplasm. It carries out the reaction AMP + ATP = 2 ADP. Its pathway is purine metabolism; AMP biosynthesis via salvage pathway; AMP from ADP: step 1/1. Functionally, catalyzes the reversible transfer of the terminal phosphate group between ATP and AMP. Plays an important role in cellular energy homeostasis and in adenine nucleotide metabolism. The polypeptide is Adenylate kinase (Aliivibrio salmonicida (strain LFI1238) (Vibrio salmonicida (strain LFI1238))).